The primary structure comprises 345 residues: Biotin synthase (345 aa).

Positions 60–287 constitute a Radical SAM core domain; sequence NQVQLSTLLS…RTMVRLSAGR (228 aa). 3 residues coordinate [4Fe-4S] cluster: C75, C79, and C82. C119, C150, C210, and R282 together coordinate [2Fe-2S] cluster.

This sequence belongs to the radical SAM superfamily. Biotin synthase family. Homodimer. It depends on [4Fe-4S] cluster as a cofactor. [2Fe-2S] cluster serves as cofactor.

It catalyses the reaction (4R,5S)-dethiobiotin + (sulfur carrier)-SH + 2 reduced [2Fe-2S]-[ferredoxin] + 2 S-adenosyl-L-methionine = (sulfur carrier)-H + biotin + 2 5'-deoxyadenosine + 2 L-methionine + 2 oxidized [2Fe-2S]-[ferredoxin]. Its pathway is cofactor biosynthesis; biotin biosynthesis; biotin from 7,8-diaminononanoate: step 2/2. In terms of biological role, catalyzes the conversion of dethiobiotin (DTB) to biotin by the insertion of a sulfur atom into dethiobiotin via a radical-based mechanism. The protein is Biotin synthase of Polaromonas naphthalenivorans (strain CJ2).